The following is a 121-amino-acid chain: Large ribosomal subunit protein uL18 (121 aa).

Belongs to the universal ribosomal protein uL18 family. In terms of assembly, part of the 50S ribosomal subunit; part of the 5S rRNA/L5/L18/L25 subcomplex. Contacts the 5S and 23S rRNAs.

Its function is as follows. This is one of the proteins that bind and probably mediate the attachment of the 5S RNA into the large ribosomal subunit, where it forms part of the central protuberance. This Acidovorax ebreus (strain TPSY) (Diaphorobacter sp. (strain TPSY)) protein is Large ribosomal subunit protein uL18.